A 457-amino-acid chain; its full sequence is Probable ubiquitin carboxyl-terminal hydrolase 16 (457 aa).

The interval 34 to 97 (VSSPSVPEGT…DGANDFVDED (64 aa)) is disordered. Residues 45-67 (TVLNNPKQSTVSRKSFSAPTSPT) are compositionally biased toward polar residues. Position 61 is a phosphoserine (Ser61). A Phosphothreonine modification is found at Thr64. Phosphoserine is present on Ser65. Positions 125-429 (PGLVNLGNTC…QAYILQYKRK (305 aa)) constitute a USP domain. Cys134 acts as the Nucleophile in catalysis. His388 acts as the Proton acceptor in catalysis. The tract at residues 434-457 (SKHKLNTENTVTKTSNKKRRKISF) is disordered. The segment covering 448 to 457 (SNKKRRKISF) has biased composition (basic residues).

The protein belongs to the peptidase C19 family.

It catalyses the reaction Thiol-dependent hydrolysis of ester, thioester, amide, peptide and isopeptide bonds formed by the C-terminal Gly of ubiquitin (a 76-residue protein attached to proteins as an intracellular targeting signal).. The polypeptide is Probable ubiquitin carboxyl-terminal hydrolase 16 (ubp16) (Schizosaccharomyces pombe (strain 972 / ATCC 24843) (Fission yeast)).